Here is a 142-residue protein sequence, read N- to C-terminus: Large ribosomal subunit protein uL11 (142 aa).

Belongs to the universal ribosomal protein uL11 family. In terms of assembly, part of the ribosomal stalk of the 50S ribosomal subunit. Interacts with L10 and the large rRNA to form the base of the stalk. L10 forms an elongated spine to which L12 dimers bind in a sequential fashion forming a multimeric L10(L12)X complex. Post-translationally, one or more lysine residues are methylated.

In terms of biological role, forms part of the ribosomal stalk which helps the ribosome interact with GTP-bound translation factors. This chain is Large ribosomal subunit protein uL11, found in Actinobacillus succinogenes (strain ATCC 55618 / DSM 22257 / CCUG 43843 / 130Z).